A 73-amino-acid polypeptide reads, in one-letter code: Large ribosomal subunit protein bL28 (73 aa).

It belongs to the bacterial ribosomal protein bL28 family.

The polypeptide is Large ribosomal subunit protein bL28 (Anaeromyxobacter dehalogenans (strain 2CP-1 / ATCC BAA-258)).